The chain runs to 30 residues: Thaumatin-like protein (30 aa).

Belongs to the thaumatin family.

The protein resides in the secreted. Its function is as follows. Has antifungal activity against C.comatus, F.oxysporum and P.ostreatus. This Phaseolus vulgaris (Kidney bean) protein is Thaumatin-like protein.